The primary structure comprises 108 residues: Probable 4-amino-4-deoxy-L-arabinose-phosphoundecaprenol flippase subunit ArnE (108 aa).

3 helical membrane passes run 36 to 56 (SLWL…LVLQ), 58 to 78 (LDVG…TLAG), and 85 to 105 (PVDV…FQLG).

It belongs to the ArnE family. In terms of assembly, heterodimer of ArnE and ArnF.

It localises to the cell inner membrane. It participates in bacterial outer membrane biogenesis; lipopolysaccharide biosynthesis. Functionally, translocates 4-amino-4-deoxy-L-arabinose-phosphoundecaprenol (alpha-L-Ara4N-phosphoundecaprenol) from the cytoplasmic to the periplasmic side of the inner membrane. The protein is Probable 4-amino-4-deoxy-L-arabinose-phosphoundecaprenol flippase subunit ArnE of Pseudomonas syringae pv. syringae (strain B728a).